The following is a 734-amino-acid chain: Photosystem I P700 chlorophyll a apoprotein A2 (734 aa).

8 consecutive transmembrane segments (helical) span residues 46-69, 135-158, 175-199, 273-291, 330-353, 369-395, 417-439, and 517-535; these read IFASHFGQLAIIFLWTSGNLFHVA, LYNGALFLVILSSISLIAGWLHLQ, LNHHLSGLFGVSSLAWTGHLVHVAI, IAHHHLAIAVVFIIAGHMY, LHFQLGLALASLGVITSLVAQHMY, AALYTHHQYIAGFIMTGAFAHGAIFFI, AIISHLSWASLFLGFHTLGLYVH, and FLVHHAIALGLHTTTLILV. 2 residues coordinate [4Fe-4S] cluster: Cys-559 and Cys-568. The next 2 helical transmembrane spans lie at 575–596 and 643–665; these read AFYLAVFWMLNTIGWVTFYWHW and LSVWAWMFLFGHLVWATGFMFLI. Residues His-654, Met-662, and Tyr-670 each contribute to the chlorophyll a site. Trp-671 provides a ligand contact to phylloquinone. The helical transmembrane segment at 707–727 threads the bilayer; the sequence is LVGLAHFSVGYIFTYAAFLIA.

This sequence belongs to the PsaA/PsaB family. In terms of assembly, the PsaA/B heterodimer binds the P700 chlorophyll special pair and subsequent electron acceptors. PSI consists of a core antenna complex that captures photons, and an electron transfer chain that converts photonic excitation into a charge separation. The eukaryotic PSI reaction center is composed of at least 11 subunits. P700 is a chlorophyll a/chlorophyll a' dimer, A0 is one or more chlorophyll a, A1 is one or both phylloquinones and FX is a shared 4Fe-4S iron-sulfur center. is required as a cofactor.

The protein resides in the plastid. The protein localises to the chloroplast thylakoid membrane. The catalysed reaction is reduced [plastocyanin] + hnu + oxidized [2Fe-2S]-[ferredoxin] = oxidized [plastocyanin] + reduced [2Fe-2S]-[ferredoxin]. PsaA and PsaB bind P700, the primary electron donor of photosystem I (PSI), as well as the electron acceptors A0, A1 and FX. PSI is a plastocyanin-ferredoxin oxidoreductase, converting photonic excitation into a charge separation, which transfers an electron from the donor P700 chlorophyll pair to the spectroscopically characterized acceptors A0, A1, FX, FA and FB in turn. Oxidized P700 is reduced on the lumenal side of the thylakoid membrane by plastocyanin. The sequence is that of Photosystem I P700 chlorophyll a apoprotein A2 from Marchantia polymorpha (Common liverwort).